The primary structure comprises 37 residues: Potassium channel toxin alpha-KTx 3.9 (37 aa).

3 disulfides stabilise this stretch: C7–C27, C13–C32, and C17–C34. Residues 25-32 (GKCMNRKC) are interaction with Ca(2+)-activated K(+) channels.

This sequence belongs to the short scorpion toxin superfamily. Potassium channel inhibitor family. Alpha-KTx 03 subfamily. Expressed by the venom gland.

The protein resides in the secreted. Binds and inhibits potassium channels. Intracerebroventricular injection into mice induces paralyzing symptoms followed by death. Its binding affinity to rat brain synaptosomes is 5-fold lower than this of KTX 1. This chain is Potassium channel toxin alpha-KTx 3.9 (KTX3), found in Buthus occitanus tunetanus (Common European scorpion).